The following is a 113-amino-acid chain: Iron-sulfur cluster insertion protein ErpA (113 aa).

The iron-sulfur cluster site is built by C41, C105, and C107.

This sequence belongs to the HesB/IscA family. Homodimer. It depends on iron-sulfur cluster as a cofactor.

Required for insertion of 4Fe-4S clusters for at least IspG. The sequence is that of Iron-sulfur cluster insertion protein ErpA from Aliivibrio fischeri (strain ATCC 700601 / ES114) (Vibrio fischeri).